The primary structure comprises 954 residues: Centrosomal protein of 112 kDa (954 aa).

Residues 276-954 (QKHDAEVQKI…EELTTYQSRR (679 aa)) are a coiled coil.

It localises to the cytoplasm. The protein resides in the cytoskeleton. It is found in the microtubule organizing center. Its subcellular location is the centrosome. This is Centrosomal protein of 112 kDa (Cep112) from Mus musculus (Mouse).